The sequence spans 2093 residues: MPLFMPDEELARLSSDAASVVAERADEYIRKIYAELDSVRAKADAASITAEQTCSLLEQKYLSLSQDFSSLESQNAKLQSDFDDRLAELAQSQAQKHQLHLQSIEKDGEVERMSTEMSELHKSKRQLMELLEQKDAEISEKNSTIKSYLDKIVKLTDTSSEKEARLAEATAELARSQAMCSRLSQEKELTERHAKWLDEELTAKVDSYAELRRRHSDLESEMSAKLVDVEKNYIECSSSLNWHKERLRELETKIGSLQEDLSSCKDAATTTEEQYTAELFTANKLVDLYKESSEEWSRKAGELEGVIKALEARLSQVESSYKERLDKEVSTKQLLEKENGDLKQKLEKCEAEIEKTRKTDELNLIPFSNFTRRVDNSGTSNMIEESQAVISKVPAGVSGTALAASLLRDGWSLAKIYEKYQEAVDAMRHEQLGRKEAEMILQRVLSELEEKAGFIQEERGEYERVVEAYCLVNQKLQDSVSEQSNMEKFIMELKADLRRRERENTLLQKDISDLQKQVTILLKECRDVQLRCGAARDDDEDDYPLLSDVEMEMESEADKIISEHLLKFKDINGLVEQNVKLRNLVRSLSEQIESRETELKETFEVDLKNKTDEASAKVATVLKRAEEQGQMIESLHTSVAMYKRLYEEEQKLHSSDSRSSDLSPAVVPGRKNFLHLLEDSEEATKRAQEKAFERIRILEEDFAKARSEVIAIRSERDKLAMEANFAREKLEGIMKESERKREEMNSVLARNIEFSQLIIDHQRKLRESSESLHAAEEISRKLSMEVSVLKQEKELLSNAEKRASDEVSALSQRVYRLQATLDTVQSTEEVREETRAAERRKQEEHIKQLQREWAEAKKELQEERSNARDFTSDRNQTLNNAVMQVEEMGKELANALKAVSVAESRASVAEARLSDLEKKIRSSDPKTLDMDSGGIVSLSDKEMSIELRTAKEEIEKLRGEVESSKSHMLQYKSIAQVNETALKQMESAHENFRLEAEKRQRSLEAELVSLRERVSELENDCIQKSEQLATAAAGKEDALLSASAEIASLREENLVKKSQIEAMNIQMSTLKNDLETEHEKWRVAQRNYERQVILLSETIQELTKTSQALAALQEEASELRKLADARGIENSELNAKWSEEKLMLEQQKNLAEKKYHELNEQNKLLHSRLEAKHLNSAEKNSRSGTISSGSTDSDHLEDSGLQRVVHYLRRTKEIAETEISLMRQEKLRLQSQLESALKMAESARGSLTAERASTRASLLTDDGIKSLQLQVSEMNLLRESNMQLREENKHNFEKCQEMREVAQKARMESENFENLLKTKQTELDLCMKEMEKLRMETDLHKKRVDELRETYRNIDIADYNRLKDEVRQLEEKLKAKDAHAEDCKKVLLEKQNKISLLEKELTNCKKDLSEREKRLDDAQQAQATMQSEFNKQKQELEKNKKIHYTLNMTKRKYEKEKDELSKQNQSLAKQLEEAKEEAGKRTTTDAVVEQSVKEREEKEKRIQILDKYVHQLKDEVRKKTEDLKKKDEELTKERSERKSVEKEVGDSLTKIKKEKTKVDEELAKLERYQTALTHLSEELEKLKHADGNLPEGTSAVQVLSGSILNDQAAAYVSAVEYFERVARSIASNSQVSTKPTDMVTEPSSGIPAAEPSTMTRVPSSTPLIKSPVATTQQLPKVASDNKEKRLISQKPSTEFRRPSGRRIVRPQLVKPEESPKVDVDMPEAEGTGDEGKQPAAHEPESQVTTSVRPVQTLVRKRQADSLVSEPQQDSLTQGETSSEIAPPASKKAKGSESHPDTSEGENLAKEPAIDELMDATTTTDGDNEETEAENAEEKTEEYVEAQQDNEADEPVEESPTETETIPTEEESRDQTEEENQEPLTDMESDKEEGELDLDTLEDLEEGTDVASMMRSPEKEEVQPETLATPTQSPSRMETAMEEAETTIETPVEDDKTDEGGDAAEEAADIPNNANDQQEAPETDIKPETSAATTSPVSTAPTTSSTLASAITSSGAPETEDPKRAPSPGGGSSTIVTLADRAQMKRRERIANIVVSRAPNPATRGARGRTVNLRGGGRLLPRGGRAPRGGRGQSPSPP.

4 coiled-coil regions span residues 57 to 362 (LEQK…TDEL), 439 to 529 (MILQ…RDVQ), 570 to 627 (DING…RAEE), and 688 to 1172 (QEKA…LEAK). The disordered stretch occupies residues 1175-1198 (NSAEKNSRSGTISSGSTDSDHLED). Residues 1182–1191 (RSGTISSGST) show a composition bias toward low complexity. Coiled-coil stretches lie at residues 1208 to 1252 (LRRT…AERA) and 1293 to 1585 (EKCQ…LKHA). Disordered stretches follow at residues 1453–1489 (YEKEKDELSKQNQSLAKQLEEAKEEAGKRTTTDAVVE), 1525–1555 (KKDEELTKERSERKSVEKEVGDSLTKIKKEK), and 1627–2093 (SNSQ…PSPP). A compositionally biased stretch (basic and acidic residues) spans 1470–1483 (QLEEAKEEAGKRTT). Residues 1652–1674 (STMTRVPSSTPLIKSPVATTQQL) show a composition bias toward polar residues. Basic and acidic residues-rich tracts occupy residues 1710–1719 (KPEESPKVDV) and 1729–1740 (DEGKQPAAHEPE). Residues 1764–1779 (SEPQQDSLTQGETSSE) show a composition bias toward polar residues. The segment covering 1789–1808 (KGSESHPDTSEGENLAKEPA) has biased composition (basic and acidic residues). The stretch at 1818 to 1849 (TTDGDNEETEAENAEEKTEEYVEAQQDNEADE) forms a coiled coil. 2 stretches are compositionally biased toward acidic residues: residues 1821–1830 (GDNEETEAEN) and 1838–1903 (YVEA…EEGT). The segment covering 1921–1931 (TLATPTQSPSR) has biased composition (polar residues). Residues 1935 to 1963 (AMEEAETTIETPVEDDKTDEGGDAAEEAA) are compositionally biased toward acidic residues. Over residues 1984–2009 (TSAATTSPVSTAPTTSSTLASAITSS) the composition is skewed to low complexity. At Ser-2022 the chain carries Phosphoserine.

Part of the nuclear pore complex (NPC). The NPC has an eight-fold symmetrical structure comprising a central transport channel and two rings, the cytoplasmic and nuclear rings, to which eight filaments are attached. The cytoplasmic filaments have loose ends, while the nuclear filaments are joined in a distal ring, forming a nuclear basket. NPCs are highly dynamic in configuration and composition, and can be devided in 3 subcomplexes, the NUP62 subcomplex, the NUP107-160 subcomplex and the NUP93 subcomplex, containing approximately 30 different nucleoporin proteins. Interacts with MAD1 and (via N-terminus) with ESD4. Ubiquitous. Highest expression in the shoot apical region.

The protein resides in the nucleus envelope. It is found in the nucleus membrane. It localises to the nucleus. Its subcellular location is the nuclear pore complex. Its function is as follows. Component of the nuclear pore complex. Acts as a docking site for activities required for desumoylation and mRNA export. Required for the proper expression or localization of a subset of miRNAs. Plays a role in meristematic cell division by interacting with spindle assembly checkpoint proteins. The chain is Nuclear-pore anchor from Arabidopsis thaliana (Mouse-ear cress).